Here is a 353-residue protein sequence, read N- to C-terminus: UPF0283 membrane protein YcjF (353 aa).

3 helical membrane-spanning segments follow: residues 70 to 90 (MVMGGLALFGASVVGQGVQWT), 100 to 120 (VALGGCAAGALIIGAGVGSVV), and 213 to 233 (ESTLMIAVSPLALVDMAFIAW).

The protein belongs to the UPF0283 family.

The protein resides in the cell inner membrane. The sequence is that of UPF0283 membrane protein YcjF from Escherichia fergusonii (strain ATCC 35469 / DSM 13698 / CCUG 18766 / IAM 14443 / JCM 21226 / LMG 7866 / NBRC 102419 / NCTC 12128 / CDC 0568-73).